Reading from the N-terminus, the 183-residue chain is Putative manganese efflux pump MntP (183 aa).

The next 6 helical transmembrane spans lie at 3 to 23, 43 to 63, 66 to 86, 107 to 127, 134 to 154, and 161 to 181; these read TISV…LSIY, TFGI…ILFI, ISLY…LMML, LIIM…TFSI, FLYT…GFIL, and ILGQ…SINI.

Belongs to the MntP (TC 9.B.29) family.

It is found in the cell inner membrane. In terms of biological role, probably functions as a manganese efflux pump. This chain is Putative manganese efflux pump MntP, found in Fusobacterium nucleatum subsp. nucleatum (strain ATCC 25586 / DSM 15643 / BCRC 10681 / CIP 101130 / JCM 8532 / KCTC 2640 / LMG 13131 / VPI 4355).